A 202-amino-acid polypeptide reads, in one-letter code: LexA repressor (202 aa).

The segment at residues 28–48 (RAEIAAQLGFRSPNAAEEHLK) is a DNA-binding region (H-T-H motif). Residues Ser119 and Lys156 each act as for autocatalytic cleavage activity in the active site.

Belongs to the peptidase S24 family. As to quaternary structure, homodimer.

The catalysed reaction is Hydrolysis of Ala-|-Gly bond in repressor LexA.. Functionally, represses a number of genes involved in the response to DNA damage (SOS response), including recA and lexA. Binds to the 16 bp palindromic sequence 5'-CTGTATATATATACAG-3'. In the presence of single-stranded DNA, RecA interacts with LexA causing an autocatalytic cleavage which disrupts the DNA-binding part of LexA, leading to derepression of the SOS regulon and eventually DNA repair. This is LexA repressor from Erwinia tasmaniensis (strain DSM 17950 / CFBP 7177 / CIP 109463 / NCPPB 4357 / Et1/99).